The chain runs to 184 residues: Ras-related protein Rap-1b-like protein (184 aa).

10-18 (GSRGVGKSA) provides a ligand contact to GTP. An Effector region motif is present at residues 32-40 (YDPTIEDSY). GTP contacts are provided by residues 57–61 (DTAGT), 116–119 (NKCD), and 147–149 (SAK). Cys181 carries S-geranylgeranyl cysteine lipidation. Residues 182 to 184 (QLL) constitute a propeptide, removed in mature form.

This sequence belongs to the small GTPase superfamily. Ras family.

It is found in the cell membrane. The protein localises to the cytoplasm. Its subcellular location is the cytosol. It carries out the reaction GTP + H2O = GDP + phosphate + H(+). Its function is as follows. Probable GTP-binding protein with intrinsic GTPase activity. This chain is Ras-related protein Rap-1b-like protein, found in Homo sapiens (Human).